Reading from the N-terminus, the 150-residue chain is 3-hydroxyacyl-[acyl-carrier-protein] dehydratase FabZ (150 aa).

H53 is an active-site residue.

The protein belongs to the thioester dehydratase family. FabZ subfamily.

It localises to the cytoplasm. The catalysed reaction is a (3R)-hydroxyacyl-[ACP] = a (2E)-enoyl-[ACP] + H2O. Its function is as follows. Involved in unsaturated fatty acids biosynthesis. Catalyzes the dehydration of short chain beta-hydroxyacyl-ACPs and long chain saturated and unsaturated beta-hydroxyacyl-ACPs. The chain is 3-hydroxyacyl-[acyl-carrier-protein] dehydratase FabZ from Proteus mirabilis (strain HI4320).